The sequence spans 428 residues: Ribosome biogenesis protein WDR12 homolog (428 aa).

Residues L13–E97 form a ubiquitin-like (UBL) domain region. 7 WD repeats span residues L109 to I146, G148 to E190, G197 to E236, G259 to E297, T299 to V338, G344 to F384, and G388 to K426.

It belongs to the WD repeat WDR12/YTM1 family.

Its subcellular location is the nucleus. The protein localises to the nucleolus. The protein resides in the nucleoplasm. Functionally, required for maturation of ribosomal RNAs and formation of the large ribosomal subunit. The sequence is that of Ribosome biogenesis protein WDR12 homolog from Anopheles gambiae (African malaria mosquito).